Here is a 259-residue protein sequence, read N- to C-terminus: Small ribosomal subunit protein uS2 (259 aa).

It belongs to the universal ribosomal protein uS2 family.

The chain is Small ribosomal subunit protein uS2 from Fervidobacterium nodosum (strain ATCC 35602 / DSM 5306 / Rt17-B1).